The following is a 169-amino-acid chain: S-ribosylhomocysteine lyase (169 aa).

H54, H58, and C128 together coordinate Fe cation.

Belongs to the LuxS family. As to quaternary structure, homodimer. Fe cation serves as cofactor.

The enzyme catalyses S-(5-deoxy-D-ribos-5-yl)-L-homocysteine = (S)-4,5-dihydroxypentane-2,3-dione + L-homocysteine. Functionally, involved in the synthesis of autoinducer 2 (AI-2) which is secreted by bacteria and is used to communicate both the cell density and the metabolic potential of the environment. The regulation of gene expression in response to changes in cell density is called quorum sensing. Catalyzes the transformation of S-ribosylhomocysteine (RHC) to homocysteine (HC) and 4,5-dihydroxy-2,3-pentadione (DPD). The protein is S-ribosylhomocysteine lyase of Shewanella loihica (strain ATCC BAA-1088 / PV-4).